A 1576-amino-acid polypeptide reads, in one-letter code: Calmodulin-regulated spectrin-associated protein 1 (1576 aa).

One can recognise a Calponin-homology (CH) domain in the interval 217–332 (ESPSHPKVRY…FIAELFWWFE (116 aa)). Disordered regions lie at residues 415–447 (HPLLPLRQKQQKSVKPEESLNHRDQANSLTRAD), 549–572 (DLELQSVSSRASSQMSTSRLRRPA), 595–653 (KEKH…LESD), and 811–852 (YETK…QNRD). Residues 428 to 439 (VKPEESLNHRDQ) show a composition bias toward basic and acidic residues. A compositionally biased stretch (low complexity) spans 554-566 (SVSSRASSQMSTS). Over residues 595 to 611 (KEKHMVPKSEEYGEGKQ) the composition is skewed to basic and acidic residues. Composition is skewed to polar residues over residues 613–626 (GFSSKRQNEGNQSF) and 642–651 (RTFTPLSSLE). Positions 813–824 (TKSSTSSSQKTT) are enriched in low complexity. The segment covering 840-852 (QRREQSPGRQNRD) has biased composition (basic and acidic residues). Coiled-coil stretches lie at residues 857–889 (LASELVQLHMQLEEKRRVIEAQKKKMESLSARQ) and 992–1022 (DVNECDLSIEKLNETISTLQQAIMKISQQQE). Disordered regions lie at residues 1108–1149 (LKSV…RLHN), 1178–1236 (SSRV…ISDD), and 1274–1422 (RLRK…DWEN). Residues 1116–1131 (SPSVPTEESPVEVVPE) show a composition bias toward low complexity. Over residues 1178–1189 (SSRVAGVSTSES) the composition is skewed to polar residues. Composition is skewed to basic and acidic residues over residues 1195–1204 (VPVDERHKSS), 1225–1236 (HPEKTKDIISDD), and 1274–1323 (RLRK…KQEQ). A coiled-coil region spans residues 1254-1315 (ELAKKRAAFL…KARRELIKQE (62 aa)). Residues 1333–1346 (PKPKPKSKKTRPKS) show a composition bias toward basic residues. The span at 1354–1366 (SDSGTKYSSTPDN) shows a compositional bias: polar residues. The span at 1367-1382 (LSSAQSGSSLSLASGA) shows a compositional bias: low complexity. Polar residues predominate over residues 1383–1394 (TTEAESVHSGGT). Residues 1437-1571 (GPKLYKEPSS…QAKRPALPKK (135 aa)) enclose the CKK domain.

It belongs to the CAMSAP1 family.

It is found in the cytoplasm. It localises to the cytoskeleton. Key microtubule-organizing protein that specifically binds the minus-end of non-centrosomal microtubules and regulates their dynamics and organization. Specifically recognizes growing microtubule minus-ends and stabilizes microtubules. Acts on free microtubule minus-ends that are not capped by microtubule-nucleating proteins or other factors and protects microtubule minus-ends from depolymerization. In contrast to camsap2 and camsap3, tracks along the growing tips of minus-end microtubules without significantly affecting the polymerization rate: binds at the very tip of the microtubules minus-end and acts as a minus-end tracking protein (-TIP) that dissociates from microtubules after allowing tubulin incorporation. Through interaction with spectrin may regulate neurite outgrowth. The chain is Calmodulin-regulated spectrin-associated protein 1 (camsap1) from Xenopus laevis (African clawed frog).